The primary structure comprises 291 residues: Isopentenyl-diphosphate Delta-isomerase I, chloroplastic (291 aa).

The N-terminal 52 residues, 1 to 52, are a transit peptide targeting the chloroplast; sequence MSTASLFSFPSFHLRSLLPSLSSSSSSSSSRFAPPRLSPIRSPAPRTQLSVR. Serine 2 bears the N-acetylthreonine mark. Low complexity predominate over residues 20–39; that stretch reads SLSSSSSSSSSRFAPPRLSP. Residues 20-43 are disordered; the sequence is SLSSSSSSSSSRFAPPRLSPIRSP. Lysine 95 lines the substrate pocket. Residues histidine 99 and histidine 111 each coordinate Mg(2+). A Nudix hydrolase domain is found at 109–261; sequence LLHRAFSVFL…AVKLSPWFRL (153 aa). Residues arginine 130 and lysine 134 each contribute to the substrate site. Residue cysteine 146 is part of the active site. Serine 147 is a substrate binding site. The Nudix box signature appears at 147 to 177; it reads SHPLYRESELIEENVLGVRNAAQRKLFDELG. Residues glutamate 206 and glutamate 208 each coordinate Mg(2+). Glutamate 208 is an active-site residue.

The protein belongs to the IPP isomerase type 1 family. Requires Mg(2+) as cofactor.

Its subcellular location is the plastid. The protein resides in the chloroplast. It is found in the cytoplasm. The enzyme catalyses isopentenyl diphosphate = dimethylallyl diphosphate. Its pathway is isoprenoid biosynthesis; dimethylallyl diphosphate biosynthesis; dimethylallyl diphosphate from isopentenyl diphosphate: step 1/1. It participates in porphyrin-containing compound metabolism; chlorophyll biosynthesis. In terms of biological role, catalyzes the 1,3-allylic rearrangement of the homoallylic substrate isopentenyl (IPP) to its highly electrophilic allylic isomer, dimethylallyl diphosphate (DMAPP). The protein is Isopentenyl-diphosphate Delta-isomerase I, chloroplastic (IPP1) of Arabidopsis thaliana (Mouse-ear cress).